The primary structure comprises 143 residues: Nucleoside diphosphate kinase (143 aa).

Residues Lys-11, Phe-59, Arg-87, Thr-93, Arg-104, and Asn-114 each coordinate ATP. His-117 functions as the Pros-phosphohistidine intermediate in the catalytic mechanism.

This sequence belongs to the NDK family. Homotetramer. It depends on Mg(2+) as a cofactor.

The protein localises to the cytoplasm. The catalysed reaction is a 2'-deoxyribonucleoside 5'-diphosphate + ATP = a 2'-deoxyribonucleoside 5'-triphosphate + ADP. It catalyses the reaction a ribonucleoside 5'-diphosphate + ATP = a ribonucleoside 5'-triphosphate + ADP. Its function is as follows. Major role in the synthesis of nucleoside triphosphates other than ATP. The ATP gamma phosphate is transferred to the NDP beta phosphate via a ping-pong mechanism, using a phosphorylated active-site intermediate. This Pseudoalteromonas translucida (strain TAC 125) protein is Nucleoside diphosphate kinase.